Reading from the N-terminus, the 431-residue chain is Gamma-glutamyl phosphate reductase (431 aa).

This sequence belongs to the gamma-glutamyl phosphate reductase family.

The protein resides in the cytoplasm. It carries out the reaction L-glutamate 5-semialdehyde + phosphate + NADP(+) = L-glutamyl 5-phosphate + NADPH + H(+). It participates in amino-acid biosynthesis; L-proline biosynthesis; L-glutamate 5-semialdehyde from L-glutamate: step 2/2. In terms of biological role, catalyzes the NADPH-dependent reduction of L-glutamate 5-phosphate into L-glutamate 5-semialdehyde and phosphate. The product spontaneously undergoes cyclization to form 1-pyrroline-5-carboxylate. The chain is Gamma-glutamyl phosphate reductase from Methylobacterium nodulans (strain LMG 21967 / CNCM I-2342 / ORS 2060).